Here is a 360-residue protein sequence, read N- to C-terminus: Thiol protease SEN102 (360 aa).

The first 20 residues, 1–20 (MAKPKFIALALVALSFLSIA), serve as a signal peptide directing secretion. The propeptide at 21–133 (QSIPFTEKDL…ENVGSLPAAS (113 aa)) is activation peptide. 3 disulfide bridges follow: C151/C193, C185/C225, and C283/C335. Residue C154 is part of the active site. Residues H289 and N310 contribute to the active site. The N-linked (GlcNAc...) asparagine glycan is linked to N353. The Prevents secretion from ER motif lies at 357 to 360 (RDEL).

It belongs to the peptidase C1 family.

The protein resides in the endoplasmic reticulum lumen. This chain is Thiol protease SEN102 (SEN102), found in Hemerocallis sp. (Daylily).